Reading from the N-terminus, the 151-residue chain is Deazaflavin-dependent nitroreductase (151 aa).

Coenzyme F420-(gamma-Glu)n contacts are provided by residues 54-56 (RKT), 60-65 (RVNPLY), 76-79 (AASK), 87-91 (MWYLN), and Y133.

Belongs to the F420H(2)-dependent quinone reductase family.

Its subcellular location is the cell membrane. The enzyme catalyses oxidized coenzyme F420-(gamma-L-Glu)(n) + a quinol + H(+) = reduced coenzyme F420-(gamma-L-Glu)(n) + a quinone. Involved in a F420-dependent anti-oxidant mechanism that protects M.tuberculosis against oxidative stress and bactericidal agents. Catalyzes the F420H(2)-dependent two-electron reduction of quinones to dihydroquinones, thereby preventing the formation of cytotoxic semiquinones obtained by the one-electron reduction pathway. In vitro, catalyzes the reduction of both benzoquinone and naphthoquinone analogs; since menaquinone is the sole quinone electron carrier in the respiratory chain in M.tuberculosis, the physiological electron acceptor for Fqr-mediated F420H(2) oxidation is therefore likely to be the endogenous menaquinone found in the membrane fraction of M.tuberculosis. Is able to use F420 species with two and five glutamate residues in its polyglutamate tail. Cannot use NADH or NADPH instead of F420H(2) as the electron donor. Its function is as follows. Is involved in the bioreductive activation of bicyclic 4-nitroimidazole prodrugs such as PA-824 and delamanid developed for anti-tuberculosis therapy against both replicating and persistent bacteria. It converts PA-824 into three primary metabolites resulting from reduction of the imidazole ring at C-3; the major one is the corresponding des-nitroimidazole that generates lethal reactive nitrogen species, including nitric oxide (NO), which appears to be responsible for the anaerobic killing activity. Ddn uses the reduced F420 produced by FGD1 to activate PA-824. Delamanid (OPC-67683) is also reduced by Ddn to its des-nitro form. The protein is Deazaflavin-dependent nitroreductase (ddn) of Mycobacterium tuberculosis (strain CDC 1551 / Oshkosh).